Consider the following 393-residue polypeptide: MTVPATKKDLMIINMGPHHPSMHGVLRLIVTLDGEDVIDCEPILGYLHRGMEKIAENRTIIQYLPYVTRWDYLATMFTEAITVNAPEQLGNIQVPKRASYIRVIMLELSRIASHLLWLGPFMADIGAQTPFFYIFRERELLYDLFEAATGMRMMHNYFRIGGVAADLPHGWIDKCLDFCDYSLTGVVEYQKLITRNPIFLERVEEVGIIGGEEAINWGLSGPMLRASGIQWDLRKVDHYECYDEFDWEVQWQKEGDSLARYLVRISEMTESIKILQQALEGIPGGPYENLEVRRFDRAKDSEWNDFEYRFISKKPSPTFELLKQELYVRVEAPKGELGIFLIGDNSVFPWRWKIRPPGFINLQILPQLVKRMKLADIMTILGSIDIIMGEVDR.

The protein belongs to the complex I 49 kDa subunit family. In terms of assembly, NDH is composed of at least 16 different subunits, 5 of which are encoded in the nucleus.

The protein localises to the plastid. The protein resides in the chloroplast thylakoid membrane. The catalysed reaction is a plastoquinone + NADH + (n+1) H(+)(in) = a plastoquinol + NAD(+) + n H(+)(out). The enzyme catalyses a plastoquinone + NADPH + (n+1) H(+)(in) = a plastoquinol + NADP(+) + n H(+)(out). In terms of biological role, NDH shuttles electrons from NAD(P)H:plastoquinone, via FMN and iron-sulfur (Fe-S) centers, to quinones in the photosynthetic chain and possibly in a chloroplast respiratory chain. The immediate electron acceptor for the enzyme in this species is believed to be plastoquinone. Couples the redox reaction to proton translocation, and thus conserves the redox energy in a proton gradient. The chain is NAD(P)H-quinone oxidoreductase subunit H, chloroplastic from Drimys granadensis.